The chain runs to 349 residues: Ribosomal RNA large subunit methyltransferase M (349 aa).

Residues 216–219 (APGG), Asp235, Asp255, and Asp271 each bind S-adenosyl-L-methionine. Catalysis depends on Lys300, which acts as the Proton acceptor.

It belongs to the class I-like SAM-binding methyltransferase superfamily. RNA methyltransferase RlmE family. RlmM subfamily. As to quaternary structure, monomer.

It is found in the cytoplasm. It catalyses the reaction cytidine(2498) in 23S rRNA + S-adenosyl-L-methionine = 2'-O-methylcytidine(2498) in 23S rRNA + S-adenosyl-L-homocysteine + H(+). Catalyzes the 2'-O-methylation at nucleotide C2498 in 23S rRNA. This chain is Ribosomal RNA large subunit methyltransferase M, found in Saccharophagus degradans (strain 2-40 / ATCC 43961 / DSM 17024).